Reading from the N-terminus, the 187-residue chain is Mitochondrial import receptor subunit TOM20-4 (187 aa).

N-acetylmethionine is present on M1. The Cytoplasmic segment spans residues 1-160 (MDMQNENERL…QKKTSEFKYD (160 aa)). The TPR repeat unit spans residues 84–117 (LSFGFLSSDQTEASDNFEKASQFFQLAVEEQPES). A helical membrane pass occupies residues 161 to 178 (VFGWVILASYVVAWISFA). At 179–187 (NSQTPVSRQ) the chain is on the mitochondrial intermembrane side. Positions 179 to 187 (NSQTPVSRQ) match the AKR2A-binding sequence (ABS) required for mitochondrion outer membrane targeting motif.

It belongs to the Tom20 family. Forms part of the preprotein translocase complex of the outer mitochondrial membrane (TOM complex) which consists of at least 6 different proteins (TOM5, TOM6, TOM7, TOM20, TOM22/TOM9 and TOM40). Interacts with a variety of mitochondrial precursor proteins. Interacts with AKR2A. Component of a mitochondrial large protein complex that contains, at least, MIC60, DGS1, TOM40, TOM20 proteins, and petC/RISP. Post-translationally, the N-terminus is blocked. In terms of tissue distribution, expressed in roots, flowers, young cotyledons and leaves.

The protein resides in the mitochondrion outer membrane. In terms of biological role, central component of the receptor complex responsible for the recognition and translocation of cytosolically synthesized mitochondrial preproteins. Together with TOM22 functions as the transit peptide receptor at the surface of the mitochondrion outer membrane and facilitates the movement of preproteins into the translocation pore. This chain is Mitochondrial import receptor subunit TOM20-4, found in Arabidopsis thaliana (Mouse-ear cress).